The primary structure comprises 85 residues: ELKEMLLKKYSGCLSRLRSEFLKKRKKGKLPKDARTVLLEWWNTHYRWPYPTEEDKVRLAAMTGLDPKQINNWFINQRKRHWKPS.

In terms of domain architecture, ELK spans E1–F21. A DNA-binding region (homeobox; TALE-type) is located at residues L22–S85.

Belongs to the TALE/KNOX homeobox family.

It is found in the nucleus. Its function is as follows. Probably binds to the DNA sequence 5'-TGAC-3'. This is Homeobox protein liguleless 3 (LG3) from Zea mays (Maize).